The primary structure comprises 519 residues: MDFLQRILGILSSEDVAPALFASSISVLFLILSYQVLYPPSKYSAFPTINGTRWLALSNRRILAEFVTDAQGLMRNGLEKYDIFRIISSIGPMTILHPKYTDEIHNDRQLNFMAVLAKEMFPNYPGFDLFREGTDGSTVLQDAVKFGSSRCLGKSTQLLSDETSTLLQKLWGDEPEWHEVTAKSSVHDIIAHLSALLFYGPELCSHKEWLEVTDEYASVGFLAARQLRLWPPILRPIAQWFLPACRRLRYLASRTRGLIEPVIAARQKEKAICYSHGRQPPVYDDAIEWTERAAKGRPYDAAMSPLLFSINALHTTTDLLTQVILDLSTQPDLIVALRQEILSVKPQQNGWKNASLNQLLLMDSAIKESQRLKPTESILMRRYAMDDLTLADGNKIPKGTVLGIPIFGMRDPKIYVDPDMYDGYRFQKMRDKPGFENKCQLVSTSPWHLGFGHGIHACPGRFLAAVQVKIILCYIVAKYDFKLAGGAPPKVQSVGIELISDTEARLAVRRRQEMVIGLE.

The chain crosses the membrane as a helical span at residues 16–33 (VAPALFASSISVLFLILS). N-linked (GlcNAc...) asparagine glycans are attached at residues Asn50 and Asn353. Residue Cys458 participates in heme binding.

It belongs to the cytochrome P450 family. Heme serves as cofactor.

The protein localises to the membrane. Its pathway is alkaloid biosynthesis; ergot alkaloid biosynthesis. Functionally, cytochrome P450 monooxygenase; part of the gene cluster that mediates the biosynthesis of fumiclavanine C, a fungal ergot alkaloid. DmaW catalyzes the first step of ergot alkaloid biosynthesis by condensing dimethylallyl diphosphate (DMAP) and tryptophan to form 4-dimethylallyl-L-tryptophan. The second step is catalyzed by the methyltransferase easF that methylates 4-dimethylallyl-L-tryptophan in the presence of S-adenosyl-L-methionine, resulting in the formation of 4-dimethylallyl-L-abrine. The catalase easC and the FAD-dependent oxidoreductase easE then transform 4-dimethylallyl-L-abrine to chanoclavine-I which is further oxidized by EasD in the presence of NAD(+), resulting in the formation of chanoclavine-I aldehyde. EasA reduces chanoclavine-I aldehyde to dihydrochanoclavine-I aldehyde that spontaneously dehydrates to form 6,8-dimethyl-6,7-didehydroergoline. EasG then catalyzes the reduction of 6,8-dimethyl-6,7-didehydroergoline to form festuclavine. Hydrolysis of festuclavine by easM then leads to the formation of fumigaclavine B which is in turn acetylated by easN to fumigaclavine A. Finally, easL catalyzes the conversion of fumigaclavine A into fumigaclavine C by attaching a dimethylallyl moiety to C-2 of the indole nucleus. The polypeptide is Cytochrome P450 monooxygenase easM (Aspergillus fumigatus (strain ATCC MYA-4609 / CBS 101355 / FGSC A1100 / Af293) (Neosartorya fumigata)).